The primary structure comprises 128 residues: Large ribosomal subunit protein bL20c (128 aa).

The protein belongs to the bacterial ribosomal protein bL20 family. Component of the chloroplast large ribosomal subunit (LSU). Mature 70S chloroplast ribosomes of higher plants consist of a small (30S) and a large (50S) subunit. The 30S small subunit contains 1 molecule of ribosomal RNA (16S rRNA) and 24 different proteins. The 50S large subunit contains 3 rRNA molecules (23S, 5S and 4.5S rRNA) and 33 different proteins.

It is found in the plastid. It localises to the chloroplast. Its function is as follows. Component of the chloroplast ribosome (chloro-ribosome), a dedicated translation machinery responsible for the synthesis of chloroplast genome-encoded proteins, including proteins of the transcription and translation machinery and components of the photosynthetic apparatus. The protein is Large ribosomal subunit protein bL20c (rpl20) of Spinacia oleracea (Spinach).